The primary structure comprises 501 residues: COP9 signalosome complex subunit 3 (501 aa).

The region spanning 275 to 445 (RFEDALFLLE…VFWTELSPVP (171 aa)) is the PCI domain.

It belongs to the CSN3 family. Component of the CSN complex, probably composed of csn-1, csn-2, csn-3, csn-4, csn-5, csn-6 and csn-7. Within the complex it probably interacts directly with csn-2 and csn-4. May interact with itself.

The protein localises to the cytoplasm. It is found in the nucleus. In terms of biological role, component of the COP9 signalosome complex (CSN), a complex involved in various cellular and developmental processes. The CSN complex is an essential regulator of the ubiquitin (Ubl) conjugation pathway by mediating the deneddylation of the cullin subunits of the SCF-type E3 ligase complexes, leading to decrease the Ubl ligase activity of SCF. The CSN complex plays an essential role in embryogenesis and oogenesis and is required to regulate microtubule stability in the early embryo. Mediates mei-3/katanin targeting for degradation at the meiosis to mitosis transition via deneddylation of cul-3. The chain is COP9 signalosome complex subunit 3 (csn-3) from Caenorhabditis elegans.